Consider the following 357-residue polypeptide: tRNA-specific 2-thiouridylase MnmA (357 aa).

ATP contacts are provided by residues 7–14 (AMSGGVDS) and methionine 33. Catalysis depends on cysteine 101, which acts as the Nucleophile. Cysteine 101 and cysteine 198 are disulfide-bonded. Glycine 125 is a binding site for ATP. Residues 148 to 150 (KDQ) are interaction with tRNA. Cysteine 198 serves as the catalytic Cysteine persulfide intermediate.

It belongs to the MnmA/TRMU family.

It localises to the cytoplasm. The enzyme catalyses S-sulfanyl-L-cysteinyl-[protein] + uridine(34) in tRNA + AH2 + ATP = 2-thiouridine(34) in tRNA + L-cysteinyl-[protein] + A + AMP + diphosphate + H(+). Functionally, catalyzes the 2-thiolation of uridine at the wobble position (U34) of tRNA, leading to the formation of s(2)U34. The protein is tRNA-specific 2-thiouridylase MnmA of Herpetosiphon aurantiacus (strain ATCC 23779 / DSM 785 / 114-95).